The primary structure comprises 121 residues: Large ribosomal subunit protein bL12 (121 aa).

It belongs to the bacterial ribosomal protein bL12 family. As to quaternary structure, homodimer. Part of the ribosomal stalk of the 50S ribosomal subunit. Forms a multimeric L10(L12)X complex, where L10 forms an elongated spine to which 2 to 4 L12 dimers bind in a sequential fashion. Binds GTP-bound translation factors.

In terms of biological role, forms part of the ribosomal stalk which helps the ribosome interact with GTP-bound translation factors. Is thus essential for accurate translation. This chain is Large ribosomal subunit protein bL12, found in Mesomycoplasma hyopneumoniae (strain 232) (Mycoplasma hyopneumoniae).